Consider the following 81-residue polypeptide: Putative membrane protein insertion efficiency factor (81 aa).

It belongs to the UPF0161 family.

The protein localises to the cell inner membrane. Its function is as follows. Could be involved in insertion of integral membrane proteins into the membrane. This chain is Putative membrane protein insertion efficiency factor, found in Legionella pneumophila subsp. pneumophila (strain Philadelphia 1 / ATCC 33152 / DSM 7513).